A 189-amino-acid polypeptide reads, in one-letter code: Elongation factor P (189 aa).

K34 carries the N6-(3,6-diaminohexanoyl)-5-hydroxylysine modification.

It belongs to the elongation factor P family. Post-translationally, may be beta-lysylated on the epsilon-amino group of Lys-34 by the combined action of EpmA and EpmB, and then hydroxylated on the C5 position of the same residue by EpmC (if this protein is present). Lysylation is critical for the stimulatory effect of EF-P on peptide-bond formation. The lysylation moiety may extend toward the peptidyltransferase center and stabilize the terminal 3-CCA end of the tRNA. Hydroxylation of the C5 position on Lys-34 may allow additional potential stabilizing hydrogen-bond interactions with the P-tRNA.

It is found in the cytoplasm. Its pathway is protein biosynthesis; polypeptide chain elongation. In terms of biological role, involved in peptide bond synthesis. Alleviates ribosome stalling that occurs when 3 or more consecutive Pro residues or the sequence PPG is present in a protein, possibly by augmenting the peptidyl transferase activity of the ribosome. Modification of Lys-34 is required for alleviation. The chain is Elongation factor P from Idiomarina loihiensis (strain ATCC BAA-735 / DSM 15497 / L2-TR).